The following is a 129-amino-acid chain: Small ribosomal subunit protein uS8mz (129 aa).

The protein belongs to the universal ribosomal protein uS8 family. As to quaternary structure, component of the mitochondrial ribosome small subunit.

Its subcellular location is the mitochondrion. This is Small ribosomal subunit protein uS8mz (RPS15AB) from Arabidopsis thaliana (Mouse-ear cress).